Reading from the N-terminus, the 303-residue chain is mRNA-capping enzyme subunit beta (303 aa).

Belongs to the fungal TPase family. In terms of assembly, heterodimer. The mRNA-capping enzyme is composed of two separate chains alpha and beta, respectively a mRNA guanylyltransferase and an mRNA 5'-triphosphate monophosphatase. The cofactor is Mg(2+).

Its subcellular location is the nucleus. It catalyses the reaction a 5'-end triphospho-ribonucleoside in mRNA + H2O = a 5'-end diphospho-ribonucleoside in mRNA + phosphate + H(+). In terms of biological role, first step of mRNA capping. Converts the 5'-triphosphate end of a nascent mRNA chain into a diphosphate end. The polypeptide is mRNA-capping enzyme subunit beta (pct1) (Schizosaccharomyces pombe (strain 972 / ATCC 24843) (Fission yeast)).